The following is a 353-amino-acid chain: Photosystem II D2 protein (353 aa).

Thr-2 is subject to N-acetylthreonine. Thr-2 is modified (phosphothreonine). The chain crosses the membrane as a helical span at residues Cys-41 to Thr-61. His-118 lines the chlorophyll a pocket. The chain crosses the membrane as a helical span at residues Gly-125–Pro-141. Residues Gln-130 and Asn-143 each contribute to the pheophytin a site. The helical transmembrane segment at Val-153–Ser-166 threads the bilayer. Residue His-198 participates in chlorophyll a binding. The chain crosses the membrane as a helical span at residues Ala-208–Asp-228. Residues His-215 and Phe-262 each contribute to the a plastoquinone site. Residue His-215 participates in Fe cation binding. Residue His-269 coordinates Fe cation. The helical transmembrane segment at Gly-279 to Arg-295 threads the bilayer.

This sequence belongs to the reaction center PufL/M/PsbA/D family. As to quaternary structure, PSII is composed of 1 copy each of membrane proteins PsbA, PsbB, PsbC, PsbD, PsbE, PsbF, PsbH, PsbI, PsbJ, PsbK, PsbL, PsbM, PsbT, PsbX, PsbY, PsbZ, Psb30/Ycf12, at least 3 peripheral proteins of the oxygen-evolving complex and a large number of cofactors. It forms dimeric complexes. Requires The D1/D2 heterodimer binds P680, chlorophylls that are the primary electron donor of PSII, and subsequent electron acceptors. It shares a non-heme iron and each subunit binds pheophytin, quinone, additional chlorophylls, carotenoids and lipids. There is also a Cl(-1) ion associated with D1 and D2, which is required for oxygen evolution. The PSII complex binds additional chlorophylls, carotenoids and specific lipids. as cofactor.

The protein resides in the plastid. It localises to the chloroplast thylakoid membrane. The catalysed reaction is 2 a plastoquinone + 4 hnu + 2 H2O = 2 a plastoquinol + O2. In terms of biological role, photosystem II (PSII) is a light-driven water:plastoquinone oxidoreductase that uses light energy to abstract electrons from H(2)O, generating O(2) and a proton gradient subsequently used for ATP formation. It consists of a core antenna complex that captures photons, and an electron transfer chain that converts photonic excitation into a charge separation. The D1/D2 (PsbA/PsbD) reaction center heterodimer binds P680, the primary electron donor of PSII as well as several subsequent electron acceptors. D2 is needed for assembly of a stable PSII complex. This chain is Photosystem II D2 protein, found in Drimys granadensis.